A 353-amino-acid polypeptide reads, in one-letter code: D-alanine--D-alanine ligase (353 aa).

Residues 135-344 (KMVFAQAGLA…FPQLVDRLVQ (210 aa)) enclose the ATP-grasp domain. An ATP-binding site is contributed by 171 to 226 (EAQLDYPMFVKPANLGSSVGISKVRTRDELEKALDLAAEYDRRLIVEAGVTAREVE). Mg(2+) contacts are provided by Asp-297, Glu-311, and Asn-313.

This sequence belongs to the D-alanine--D-alanine ligase family. It depends on Mg(2+) as a cofactor. Mn(2+) serves as cofactor.

It localises to the cytoplasm. The catalysed reaction is 2 D-alanine + ATP = D-alanyl-D-alanine + ADP + phosphate + H(+). It functions in the pathway cell wall biogenesis; peptidoglycan biosynthesis. Its function is as follows. Cell wall formation. The protein is D-alanine--D-alanine ligase of Picosynechococcus sp. (strain ATCC 27264 / PCC 7002 / PR-6) (Agmenellum quadruplicatum).